A 321-amino-acid chain; its full sequence is Malate dehydrogenase (321 aa).

NAD(+) is bound by residues 10–15 (GAGQIG) and D34. Substrate contacts are provided by R83 and R89. NAD(+) contacts are provided by residues N96 and 119 to 121 (ITN). Substrate contacts are provided by N121 and R152. H176 (proton acceptor) is an active-site residue.

Belongs to the LDH/MDH superfamily. MDH type 3 family.

It catalyses the reaction (S)-malate + NAD(+) = oxaloacetate + NADH + H(+). Catalyzes the reversible oxidation of malate to oxaloacetate. In Methylocella silvestris (strain DSM 15510 / CIP 108128 / LMG 27833 / NCIMB 13906 / BL2), this protein is Malate dehydrogenase.